We begin with the raw amino-acid sequence, 269 residues long: MLFDVFQQYPAAMPVLATVGGLIIGSFLNVVIWRYPIMLRQQMAEFHGEMPSVQSKISLALPRSHCPHCQQTIRIRDNIPLLSWLMLKGRCRDCQAKISKRYPLVELLTALAFLLASLVWPESGWALAVMILSAWLIAASVIDLDHQWLPDVFTQGVLWTGLIAAWAQQSPLTLQDAVTGVLVGFIAFYSLRWIAGIVLRKEALGMGDVLLFAALGSWVGPLSLPNVALIASCCGLIYAVITKRGTTTLPFGPCLSLGGIATIYLQALF.

The next 7 helical transmembrane spans lie at 13–33 (MPVL…VVIW), 102–122 (YPLV…VWPE), 124–144 (GWAL…VIDL), 147–167 (QWLP…AAWA), 178–198 (VTGV…AGIV), 210–230 (LLFA…VALI), and 249–269 (LPFG…QALF).

This sequence belongs to the peptidase A24 family.

It localises to the cell inner membrane. It carries out the reaction Typically cleaves a -Gly-|-Phe- bond to release an N-terminal, basic peptide of 5-8 residues from type IV prepilin, and then N-methylates the new N-terminal amino group, the methyl donor being S-adenosyl-L-methionine.. Cleaves type-4 fimbrial leader sequence and methylates the N-terminal (generally Phe) residue. This Escherichia coli O78:H11 (strain H10407 / ETEC) protein is Type 4 prepilin-like proteins leader peptide-processing enzyme.